The sequence spans 273 residues: Cilia- and flagella-associated protein 298-B (273 aa).

It belongs to the CFAP298 family.

It is found in the cytoplasm. The protein localises to the cytoskeleton. The protein resides in the cilium basal body. Plays a role in motile cilium function, possibly by acting on outer dynein arm assembly. Seems to be important for initiation rather than maintenance of cilium motility. Required for correct positioning of the cilium at the apical cell surface, suggesting an additional role in the planar cell polarity (PCP) pathway. May suppress canonical Wnt signaling activity. The sequence is that of Cilia- and flagella-associated protein 298-B (cfap298-b) from Xenopus laevis (African clawed frog).